A 540-amino-acid polypeptide reads, in one-letter code: Probable feruloyl esterase B-1 (540 aa).

A signal peptide spans 1 to 18 (MLVMQLLLPFLASTAAAA). Residues N28, N49, N66, N95, N113, and N195 are each glycosylated (N-linked (GlcNAc...) asparagine). 2 cysteine pairs are disulfide-bonded: C41–C90 and C76–C129. Disulfide bonds link C202–C458, C271–C288, and C297–C308. S203 (acyl-ester intermediate) is an active-site residue. An N-linked (GlcNAc...) asparagine glycan is attached at N234. 5 residues coordinate Ca(2+): D272, D275, A277, D279, and I281. N-linked (GlcNAc...) asparagine glycans are attached at residues N298, N328, and N367. Active-site charge relay system residues include D417 and H457. An N-linked (GlcNAc...) asparagine glycan is attached at N506. C517 and C539 are oxidised to a cystine.

This sequence belongs to the tannase family. As to quaternary structure, homodimer.

It localises to the secreted. It carries out the reaction feruloyl-polysaccharide + H2O = ferulate + polysaccharide.. Functionally, involved in degradation of plant cell walls. Hydrolyzes the feruloyl-arabinose ester bond in arabinoxylans as well as the feruloyl-galactose and feruloyl-arabinose ester bonds in pectin. The sequence is that of Probable feruloyl esterase B-1 (faeB-1) from Aspergillus oryzae (strain ATCC 42149 / RIB 40) (Yellow koji mold).